A 72-amino-acid chain; its full sequence is Protein kish-A (72 aa).

The signal sequence occupies residues 1-26 (MSAIFNFQSLLTVILLLICTCAYIRS). Over 27–53 (LAPSLLDKNKTGLLGIFWKCARIGERK) the chain is Extracellular. An N-linked (GlcNAc...) asparagine glycan is attached at N35. Residues 54–71 (SPYVAVCCVVMAFSILFV) traverse the membrane as a helical segment. Position 72 (Q72) is a topological domain, cytoplasmic.

Belongs to the KISH family.

The protein resides in the golgi apparatus membrane. In terms of biological role, involved in the early part of the secretory pathway. This Gallus gallus (Chicken) protein is Protein kish-A (TMEM167A).